A 100-amino-acid chain; its full sequence is Large ribosomal subunit protein bL27 (100 aa).

Positions 1-9 (MLKMNLQLF) are excised as a propeptide.

Belongs to the bacterial ribosomal protein bL27 family. Post-translationally, the N-terminus is cleaved by ribosomal processing cysteine protease Prp.

This chain is Large ribosomal subunit protein bL27, found in Clostridium perfringens (strain ATCC 13124 / DSM 756 / JCM 1290 / NCIMB 6125 / NCTC 8237 / Type A).